We begin with the raw amino-acid sequence, 613 residues long: Leucine-rich repeat and immunoglobulin-like domain-containing nogo receptor-interacting protein 1 (613 aa).

Residues 1-34 (MLAGEASMRSPILACWQPILLLMLGSILSGSATG) form the signal peptide. Disulfide bonds link C35/C41 and C39/C50. The LRRNT domain maps to 35–64 (CPPRCECSAQERAVLCHRKRFMVVPEGIPT). Topologically, residues 35–554 (CPPRCECSAQ…FDIKTLIIAT (520 aa)) are extracellular. 11 LRR repeats span residues 65–86 (ETRQLDLGKNRIKTLNQDEFAN), 89–110 (HLEELELNENIISAIEPGAFNN), 113–134 (NLRTLGLRSNRLKLIPLGVFTG), 137–158 (NLTKLDISENKIVILLDYMFQD), 161–182 (NLKSLEVGDNDLVYISHRAFSG), 185–206 (SLEQLTLEKCNLTSIPTEALSH), 209–230 (GLIVLRLRHLNINAIRDYSFKR), 257–278 (NLTSLSITHCNLTSIPYVSVRH), 281–302 (YLRFLNLSYNPIVTIEGSMLHD), 305–326 (RLQEIQLVGGQLTTVEPFAFRG), and 329–350 (YLRILNVSGNLLTTLEESAFHS). N137 is a glycosylation site (N-linked (GlcNAc...) asparagine). N-linked (GlcNAc...) asparagine glycosylation occurs at N195. Residues N257, N267, and N286 are each glycosylated (N-linked (GlcNAc...) asparagine). A glycan (N-linked (GlcNAc...) asparagine) is linked at N334. Positions 362–416 (NPLACDCRLLWVFRRRWRLNFNKQQPTCSTPEFVQGKEFKDFPDVLLPNYFTCRR) constitute an LRRCT domain. Intrachain disulfides connect C366/C389, C368/C414, and C439/C490. The region spanning 404-508 (PDVLLPNYFT…DTMLAHLHVR (105 aa)) is the Ig-like C2-type domain. N485, N498, N519, N530, and N535 each carry an N-linked (GlcNAc...) asparagine glycan. The helical transmembrane segment at 555 to 575 (TMGFISFLGVVLFCLVLLFLW) threads the bilayer. At 576 to 613 (SRGKGNTKHNIEIEYVPRKSDAGISSADAPRKFNMKMI) the chain is on the cytoplasmic side.

Homotetramer. Forms ternary complex with RTN4R/NGFR and RTN4R/TNFRSF19. In terms of processing, N-glycosylated. Contains predominantly high-mannose glycans.

It is found in the cell membrane. Its function is as follows. Functional component of the Nogo receptor signaling complex (RTN4R/NGFR) in RhoA activation responsible for some inhibition of axonal regeneration by myelin-associated factors. Is also an important negative regulator of oligodentrocyte differentiation and axonal myelination. This is Leucine-rich repeat and immunoglobulin-like domain-containing nogo receptor-interacting protein 1 (LINGO1) from Gallus gallus (Chicken).